A 306-amino-acid polypeptide reads, in one-letter code: Polyphosphate kinase PPK2B (306 aa).

This sequence belongs to the polyphosphate kinase 2 (PPK2) family. Class I subfamily. Homotetramer. It depends on Mn(2+) as a cofactor.

The catalysed reaction is [phosphate](n) + ATP = [phosphate](n+1) + ADP. The enzyme catalyses [phosphate](n) + GTP = [phosphate](n+1) + GDP. In terms of biological role, catalyzes the synthesis of polyP from ATP or GTP. Can also use inorganic polyphosphate (polyP) as a donor to convert ADP to ATP, but the activity is 10-fold higher in vitro for polyP synthesis than for ATP formation. This is Polyphosphate kinase PPK2B from Corynebacterium glutamicum (strain ATCC 13032 / DSM 20300 / JCM 1318 / BCRC 11384 / CCUG 27702 / LMG 3730 / NBRC 12168 / NCIMB 10025 / NRRL B-2784 / 534).